The primary structure comprises 238 residues: Large ribosomal subunit protein uL1 (238 aa).

The protein belongs to the universal ribosomal protein uL1 family. As to quaternary structure, part of the 50S ribosomal subunit.

Its function is as follows. Binds directly to 23S rRNA. The L1 stalk is quite mobile in the ribosome, and is involved in E site tRNA release. In terms of biological role, protein L1 is also a translational repressor protein, it controls the translation of the L11 operon by binding to its mRNA. In Frankia casuarinae (strain DSM 45818 / CECT 9043 / HFP020203 / CcI3), this protein is Large ribosomal subunit protein uL1.